The primary structure comprises 110 residues: MGKNDLVKTLRMNYLFDFYQTLLTEKQRNYMELFYLRDYSLSEIAETFDVSRQAVYDNIRRTGDLVEDYEAKLNLYEKFEQRRKIYDDMKQTLNDSKKLEQYINQLEELE.

This sequence belongs to the UPF0122 family.

Its function is as follows. Might take part in the signal recognition particle (SRP) pathway. This is inferred from the conservation of its genetic proximity to ftsY/ffh. May be a regulatory protein. This Staphylococcus haemolyticus (strain JCSC1435) protein is UPF0122 protein SH1678.